Reading from the N-terminus, the 284-residue chain is Bifunctional protein FolD (284 aa).

NADP(+) contacts are provided by residues 165–167 (GRS), S190, and I231.

Belongs to the tetrahydrofolate dehydrogenase/cyclohydrolase family. Homodimer.

The enzyme catalyses (6R)-5,10-methylene-5,6,7,8-tetrahydrofolate + NADP(+) = (6R)-5,10-methenyltetrahydrofolate + NADPH. The catalysed reaction is (6R)-5,10-methenyltetrahydrofolate + H2O = (6R)-10-formyltetrahydrofolate + H(+). It participates in one-carbon metabolism; tetrahydrofolate interconversion. Its function is as follows. Catalyzes the oxidation of 5,10-methylenetetrahydrofolate to 5,10-methenyltetrahydrofolate and then the hydrolysis of 5,10-methenyltetrahydrofolate to 10-formyltetrahydrofolate. This chain is Bifunctional protein FolD, found in Streptococcus thermophilus (strain CNRZ 1066).